We begin with the raw amino-acid sequence, 195 residues long: Pyridoxal 5'-phosphate synthase subunit PdxT (195 aa).

L-glutamine is bound at residue 46 to 48 (GES). The active-site Nucleophile is the C78. L-glutamine contacts are provided by residues R107 and 136–137 (IR). Active-site charge relay system residues include H173 and E175.

Belongs to the glutaminase PdxT/SNO family. In the presence of PdxS, forms a dodecamer of heterodimers. Only shows activity in the heterodimer.

The enzyme catalyses aldehydo-D-ribose 5-phosphate + D-glyceraldehyde 3-phosphate + L-glutamine = pyridoxal 5'-phosphate + L-glutamate + phosphate + 3 H2O + H(+). It catalyses the reaction L-glutamine + H2O = L-glutamate + NH4(+). The protein operates within cofactor biosynthesis; pyridoxal 5'-phosphate biosynthesis. Catalyzes the hydrolysis of glutamine to glutamate and ammonia as part of the biosynthesis of pyridoxal 5'-phosphate. The resulting ammonia molecule is channeled to the active site of PdxS. The polypeptide is Pyridoxal 5'-phosphate synthase subunit PdxT (Dehalococcoides mccartyi (strain ATCC BAA-2100 / JCM 16839 / KCTC 5957 / BAV1)).